Here is a 182-residue protein sequence, read N- to C-terminus: Adenine phosphoribosyltransferase (182 aa).

It belongs to the purine/pyrimidine phosphoribosyltransferase family. As to quaternary structure, homodimer.

It is found in the cytoplasm. It carries out the reaction AMP + diphosphate = 5-phospho-alpha-D-ribose 1-diphosphate + adenine. It functions in the pathway purine metabolism; AMP biosynthesis via salvage pathway; AMP from adenine: step 1/1. In terms of biological role, catalyzes a salvage reaction resulting in the formation of AMP, that is energically less costly than de novo synthesis. This Campylobacter concisus (strain 13826) protein is Adenine phosphoribosyltransferase.